We begin with the raw amino-acid sequence, 395 residues long: Ribonuclease D (395 aa).

Positions Leu-14–Glu-181 constitute a 3'-5' exonuclease domain. Residues Asn-219–Asp-300 form the HRDC domain.

This sequence belongs to the RNase D family. The cofactor is a divalent metal cation.

It localises to the cytoplasm. The catalysed reaction is Exonucleolytic cleavage that removes extra residues from the 3'-terminus of tRNA to produce 5'-mononucleotides.. Its function is as follows. Exonuclease involved in the 3' processing of various precursor tRNAs. Initiates hydrolysis at the 3'-terminus of an RNA molecule and releases 5'-mononucleotides. The chain is Ribonuclease D from Granulibacter bethesdensis (strain ATCC BAA-1260 / CGDNIH1).